The chain runs to 388 residues: Mitochondrial distribution and morphology protein 12 (388 aa).

One can recognise an SMP-LTD domain in the interval 1–388; the sequence is MSLDINWSLL…VFPNFHTVAL (388 aa). Disordered stretches follow at residues 75–101 and 209–249; these read DDEGDFAEEEKQREKEREERDKLRNEA and PMSI…KVSS. Residues 83-101 are compositionally biased toward basic and acidic residues; it reads EEKQREKEREERDKLRNEA. Residues 234–243 show a composition bias toward pro residues; that stretch reads PSPPAHPAGL.

Belongs to the MDM12 family. In terms of assembly, component of the ER-mitochondria encounter structure (ERMES) or MDM complex, composed of MMM1, MDM10, MDM12 and MDM34. An MMM1 homodimer associates with one molecule of MDM12 on each side in a pairwise head-to-tail manner, and the SMP-LTD domains of MMM1 and MDM12 generate a continuous hydrophobic tunnel for phospholipid trafficking.

The protein resides in the mitochondrion outer membrane. It is found in the endoplasmic reticulum membrane. Component of the ERMES/MDM complex, which serves as a molecular tether to connect the endoplasmic reticulum (ER) and mitochondria. Components of this complex are involved in the control of mitochondrial shape and protein biogenesis, and function in nonvesicular lipid trafficking between the ER and mitochondria. MDM12 is required for the interaction of the ER-resident membrane protein MMM1 and the outer mitochondrial membrane-resident beta-barrel protein MDM10. The MDM12-MMM1 subcomplex functions in the major beta-barrel assembly pathway that is responsible for biogenesis of all mitochondrial outer membrane beta-barrel proteins, and acts in a late step after the SAM complex. The MDM10-MDM12-MMM1 subcomplex further acts in the TOM40-specific pathway after the action of the MDM12-MMM1 complex. Essential for establishing and maintaining the structure of mitochondria and maintenance of mtDNA nucleoids. The polypeptide is Mitochondrial distribution and morphology protein 12 (Cryptococcus neoformans var. neoformans serotype D (strain JEC21 / ATCC MYA-565) (Filobasidiella neoformans)).